We begin with the raw amino-acid sequence, 412 residues long: Lipoyl synthase, mitochondrial (412 aa).

The N-terminal 28 residues, 1–28 (MASIAPSLKRAHAPLRKALTASSTIRAF), are a transit peptide targeting the mitochondrion. The [4Fe-4S] cluster site is built by Cys124, Cys129, Cys135, Cys155, Cys159, Cys162, and Ser372. Positions 138–361 (GSDKNAATAT…NKRALDMGFL (224 aa)) constitute a Radical SAM core domain.

It belongs to the radical SAM superfamily. Lipoyl synthase family. [4Fe-4S] cluster serves as cofactor.

The protein resides in the mitochondrion. The enzyme catalyses [[Fe-S] cluster scaffold protein carrying a second [4Fe-4S](2+) cluster] + N(6)-octanoyl-L-lysyl-[protein] + 2 oxidized [2Fe-2S]-[ferredoxin] + 2 S-adenosyl-L-methionine + 4 H(+) = [[Fe-S] cluster scaffold protein] + N(6)-[(R)-dihydrolipoyl]-L-lysyl-[protein] + 4 Fe(3+) + 2 hydrogen sulfide + 2 5'-deoxyadenosine + 2 L-methionine + 2 reduced [2Fe-2S]-[ferredoxin]. It functions in the pathway protein modification; protein lipoylation via endogenous pathway; protein N(6)-(lipoyl)lysine from octanoyl-[acyl-carrier-protein]: step 2/2. In terms of biological role, catalyzes the radical-mediated insertion of two sulfur atoms into the C-6 and C-8 positions of the octanoyl moiety bound to the lipoyl domains of lipoate-dependent enzymes, thereby converting the octanoylated domains into lipoylated derivatives. The protein is Lipoyl synthase, mitochondrial of Fusarium vanettenii (strain ATCC MYA-4622 / CBS 123669 / FGSC 9596 / NRRL 45880 / 77-13-4) (Fusarium solani subsp. pisi).